A 205-amino-acid polypeptide reads, in one-letter code: Thiamine-phosphate synthase (205 aa).

4-amino-2-methyl-5-(diphosphooxymethyl)pyrimidine-binding positions include 37–41 (QVREK) and N69. The Mg(2+) site is built by D70 and D89. S108 is a binding site for 4-amino-2-methyl-5-(diphosphooxymethyl)pyrimidine. Residue 134–136 (TGS) participates in 2-[(2R,5Z)-2-carboxy-4-methylthiazol-5(2H)-ylidene]ethyl phosphate binding. K137 serves as a coordination point for 4-amino-2-methyl-5-(diphosphooxymethyl)pyrimidine. Residues G165 and 185–186 (IS) each bind 2-[(2R,5Z)-2-carboxy-4-methylthiazol-5(2H)-ylidene]ethyl phosphate.

The protein belongs to the thiamine-phosphate synthase family. Mg(2+) serves as cofactor.

It catalyses the reaction 2-[(2R,5Z)-2-carboxy-4-methylthiazol-5(2H)-ylidene]ethyl phosphate + 4-amino-2-methyl-5-(diphosphooxymethyl)pyrimidine + 2 H(+) = thiamine phosphate + CO2 + diphosphate. The catalysed reaction is 2-(2-carboxy-4-methylthiazol-5-yl)ethyl phosphate + 4-amino-2-methyl-5-(diphosphooxymethyl)pyrimidine + 2 H(+) = thiamine phosphate + CO2 + diphosphate. It carries out the reaction 4-methyl-5-(2-phosphooxyethyl)-thiazole + 4-amino-2-methyl-5-(diphosphooxymethyl)pyrimidine + H(+) = thiamine phosphate + diphosphate. The protein operates within cofactor biosynthesis; thiamine diphosphate biosynthesis; thiamine phosphate from 4-amino-2-methyl-5-diphosphomethylpyrimidine and 4-methyl-5-(2-phosphoethyl)-thiazole: step 1/1. Functionally, condenses 4-methyl-5-(beta-hydroxyethyl)thiazole monophosphate (THZ-P) and 2-methyl-4-amino-5-hydroxymethyl pyrimidine pyrophosphate (HMP-PP) to form thiamine monophosphate (TMP). The polypeptide is Thiamine-phosphate synthase (Clostridium botulinum (strain ATCC 19397 / Type A)).